A 517-amino-acid polypeptide reads, in one-letter code: Probable bifunctional methylthioribulose-1-phosphate dehydratase/enolase-phosphatase E1 (517 aa).

Positions 1–242 (MACSGCSCEA…CIKLYQLGID (242 aa)) are methylthioribulose-1-phosphate dehydratase. Cys114 contributes to the substrate binding site. 2 residues coordinate Zn(2+): His132 and His134. Glu157 acts as the Proton donor/acceptor; for methylthioribulose-1-phosphate dehydratase activity in catalysis. His207 lines the Zn(2+) pocket. Positions 278–517 (VVLDIEGTTT…FRTIKSFSEI (240 aa)) are enolase-phosphatase E1. Residues Asp281 and Glu283 each coordinate Mg(2+). Substrate-binding positions include 416–417 (SS) and Lys450. Asp476 lines the Mg(2+) pocket.

In the N-terminal section; belongs to the aldolase class II family. MtnB subfamily. This sequence in the C-terminal section; belongs to the HAD-like hydrolase superfamily. MasA/MtnC family. Zn(2+) is required as a cofactor. The cofactor is Mg(2+).

It catalyses the reaction 5-(methylsulfanyl)-D-ribulose 1-phosphate = 5-methylsulfanyl-2,3-dioxopentyl phosphate + H2O. The catalysed reaction is 5-methylsulfanyl-2,3-dioxopentyl phosphate + H2O = 1,2-dihydroxy-5-(methylsulfanyl)pent-1-en-3-one + phosphate. It participates in amino-acid biosynthesis; L-methionine biosynthesis via salvage pathway; L-methionine from S-methyl-5-thio-alpha-D-ribose 1-phosphate: step 2/6. Its pathway is amino-acid biosynthesis; L-methionine biosynthesis via salvage pathway; L-methionine from S-methyl-5-thio-alpha-D-ribose 1-phosphate: step 3/6. It functions in the pathway amino-acid biosynthesis; L-methionine biosynthesis via salvage pathway; L-methionine from S-methyl-5-thio-alpha-D-ribose 1-phosphate: step 4/6. This Zea mays (Maize) protein is Probable bifunctional methylthioribulose-1-phosphate dehydratase/enolase-phosphatase E1.